A 380-amino-acid chain; its full sequence is 1-deoxy-D-xylulose 5-phosphate reductoisomerase (380 aa).

NADPH is bound by residues Thr10, Gly11, Ser12, Ile13, Gly36, Arg37, Asn38, and Asn120. Lys121 contacts 1-deoxy-D-xylulose 5-phosphate. Glu122 provides a ligand contact to NADPH. Asp146 is a binding site for Mn(2+). Residues Ser147, Glu148, Ser172, and His195 each coordinate 1-deoxy-D-xylulose 5-phosphate. Position 148 (Glu148) interacts with Mn(2+). An NADPH-binding site is contributed by Gly201. 1-deoxy-D-xylulose 5-phosphate contacts are provided by Ser208, Asn213, Lys214, and Glu217. Glu217 lines the Mn(2+) pocket.

Belongs to the DXR family. Mg(2+) serves as cofactor. The cofactor is Mn(2+).

It catalyses the reaction 2-C-methyl-D-erythritol 4-phosphate + NADP(+) = 1-deoxy-D-xylulose 5-phosphate + NADPH + H(+). Its pathway is isoprenoid biosynthesis; isopentenyl diphosphate biosynthesis via DXP pathway; isopentenyl diphosphate from 1-deoxy-D-xylulose 5-phosphate: step 1/6. In terms of biological role, catalyzes the NADPH-dependent rearrangement and reduction of 1-deoxy-D-xylulose-5-phosphate (DXP) to 2-C-methyl-D-erythritol 4-phosphate (MEP). This Listeria monocytogenes serotype 4b (strain F2365) protein is 1-deoxy-D-xylulose 5-phosphate reductoisomerase.